A 623-amino-acid polypeptide reads, in one-letter code: Glutamine--fructose-6-phosphate aminotransferase [isomerizing] (623 aa).

Cys2 serves as the catalytic Nucleophile; for GATase activity. Positions 2-228 (CGIVGYIGQA…NDQVVTITAD (227 aa)) constitute a Glutamine amidotransferase type-2 domain. SIS domains follow at residues 295–435 (IDEA…LRGN) and 468–613 (LGQD…VDQP). Lys618 acts as the For Fru-6P isomerization activity in catalysis.

Homodimer.

It localises to the cytoplasm. It carries out the reaction D-fructose 6-phosphate + L-glutamine = D-glucosamine 6-phosphate + L-glutamate. Functionally, catalyzes the first step in hexosamine metabolism, converting fructose-6P into glucosamine-6P using glutamine as a nitrogen source. This Corynebacterium glutamicum (strain ATCC 13032 / DSM 20300 / JCM 1318 / BCRC 11384 / CCUG 27702 / LMG 3730 / NBRC 12168 / NCIMB 10025 / NRRL B-2784 / 534) protein is Glutamine--fructose-6-phosphate aminotransferase [isomerizing].